The following is a 607-amino-acid chain: MEVTGRLFIWAILAVSCRAQLNSTAAEGRPRCTASLGGANLGETHKALILNLNADENCTWTIERPENRSIRIIFSHIQLDPDSRCENESIKVFDGRSTSGPLLGEACSKNDFVPVFESSANSLTFQIVTDWTRVQRSVFIFYYFFSSGTTIPNCGGYLQTLEGSFSSPNYPRPHPELAYCVWHIQVEKGYKINLNFTELFLEMDEYCRFDFIAVYDGPSTTSGLLKQVCGRGTPTFESSSDAMTVVLSTDYANSYRGFFASYASTYVQEVNTHSLSCASDKMRVIISKSYLQSLNYHESNLQLNDPTCRPSVSNVVEFSIPLHECGTIKKIEDHTISYTNIITFTQSPESAVITRKRHLQIVVTCEMEYNSTVEILYITEDDVIQNQSVLGKYNTSMALYESGSFENLIQESPYYVDLNQTLFVQATLHTSDPSLVVFLDTCRASPTSDFASPTYDLISSGCSRDETCEVYPLFGHYGRFQFNAFKFLRHLSSVYLKCKILICDTSDHTSRCNQGCVSRRKRDIPSYKWKTDSVIGPIRLKRDRLVNGDSGLLPQTHEAEISKQPLSHLHLFSFMVLALNVVIVVTATVRHFLNRWKDHGYQKLQVY.

An N-terminal signal peptide occupies residues 1–19; that stretch reads MEVTGRLFIWAILAVSCRA. Over 20 to 568 the chain is Lumenal; sequence QLNSTAAEGR…AEISKQPLSH (549 aa). Residue Asn-22 is glycosylated (N-linked (GlcNAc...) asparagine). A disulfide bridge connects residues Cys-32 and Cys-58. 2 consecutive CUB domains span residues 32-146 and 154-265; these read CTAS…YFFS and CGGY…YAST. A glycan (N-linked (GlcNAc...) asparagine) is linked at Asn-67. Intrachain disulfides connect Cys-85-Cys-107 and Cys-154-Cys-180. Asn-195 carries N-linked (GlcNAc...) asparagine glycosylation. A disulfide bridge links Cys-207 with Cys-229. The 244-residue stretch at 276 to 519 folds into the ZP domain; it reads SCASDKMRVI…SRCNQGCVSR (244 aa). Residue Asn-419 is glycosylated (N-linked (GlcNAc...) asparagine). Cys-442 and Cys-498 are oxidised to a cystine. The helical transmembrane segment at 569 to 589 threads the bilayer; that stretch reads LHLFSFMVLALNVVIVVTATV. Residues 590-607 are Cytoplasmic-facing; the sequence is RHFLNRWKDHGYQKLQVY.

As to expression, expressed predominantly in epithelium of uterus and oviduct.

It localises to the zymogen granule membrane. Localized to zymogen granules, where it functions in trypsinogen activation. May indirectly regulate cell motility, cell-cell and cell/extracellular matrix interactions. In Rattus norvegicus (Rat), this protein is CUB and zona pellucida-like domain-containing protein 1.